The chain runs to 207 residues: Guanylate kinase (207 aa).

The 180-residue stretch at 6 to 185 (GLLIVLSGPS…AKNRIQSIVE (180 aa)) folds into the Guanylate kinase-like domain. 13-20 (GPSGVGKG) is a binding site for ATP.

Belongs to the guanylate kinase family.

The protein resides in the cytoplasm. It carries out the reaction GMP + ATP = GDP + ADP. In terms of biological role, essential for recycling GMP and indirectly, cGMP. This chain is Guanylate kinase, found in Staphylococcus epidermidis (strain ATCC 35984 / DSM 28319 / BCRC 17069 / CCUG 31568 / BM 3577 / RP62A).